Reading from the N-terminus, the 282-residue chain is Acetyl-coenzyme A carboxylase carboxyl transferase subunit beta (282 aa).

The CoA carboxyltransferase N-terminal domain occupies 26 to 282 (QWVKCPETGE…IIRLLNLLME (257 aa)).

Belongs to the AccD/PCCB family. Acetyl-CoA carboxylase is a heterohexamer composed of biotin carboxyl carrier protein (AccB), biotin carboxylase (AccC) and two subunits each of ACCase subunit alpha (AccA) and ACCase subunit beta (AccD).

It is found in the cytoplasm. The catalysed reaction is N(6)-carboxybiotinyl-L-lysyl-[protein] + acetyl-CoA = N(6)-biotinyl-L-lysyl-[protein] + malonyl-CoA. It participates in lipid metabolism; malonyl-CoA biosynthesis; malonyl-CoA from acetyl-CoA: step 1/1. In terms of biological role, component of the acetyl coenzyme A carboxylase (ACC) complex. Biotin carboxylase (BC) catalyzes the carboxylation of biotin on its carrier protein (BCCP) and then the CO(2) group is transferred by the transcarboxylase to acetyl-CoA to form malonyl-CoA. The polypeptide is Acetyl-coenzyme A carboxylase carboxyl transferase subunit beta (Salinibacter ruber (strain DSM 13855 / M31)).